The primary structure comprises 493 residues: Alpha-amylase-related protein (493 aa).

A signal peptide spans 1-19; that stretch reads MFKFALTLTLCLAGSLSLA. Glutamine 20 bears the Pyrrolidone carboxylic acid mark. A disulfide bridge links cysteine 47 with cysteine 103. Ca(2+)-binding residues include asparagine 117, glutamine 168, and aspartate 177. A disulfide bridge links cysteine 156 with cysteine 170. Arginine 205 is a binding site for chloride. Residue aspartate 207 is the Nucleophile of the active site. Histidine 211 provides a ligand contact to Ca(2+). Glutamate 244 functions as the Proton donor in the catalytic mechanism. Asparagine 307 and arginine 342 together coordinate chloride. 3 cysteine pairs are disulfide-bonded: cysteine 375/cysteine 381, cysteine 417/cysteine 440, and cysteine 447/cysteine 459.

It belongs to the glycosyl hydrolase 13 family. As to quaternary structure, monomer. Ca(2+) serves as cofactor. The cofactor is chloride.

It localises to the secreted. The enzyme catalyses Endohydrolysis of (1-&gt;4)-alpha-D-glucosidic linkages in polysaccharides containing three or more (1-&gt;4)-alpha-linked D-glucose units.. The protein is Alpha-amylase-related protein (Amyrel) of Drosophila simulans (Fruit fly).